The sequence spans 376 residues: Glutamate 5-kinase (376 aa).

An ATP-binding site is contributed by Lys15. Positions 56, 143, and 155 each coordinate substrate. 175-176 (SD) is an ATP binding site. The PUA domain occupies 281–358 (KGTLTIDAGA…PDVMSILGIT (78 aa)).

Belongs to the glutamate 5-kinase family.

The protein resides in the cytoplasm. It carries out the reaction L-glutamate + ATP = L-glutamyl 5-phosphate + ADP. The protein operates within amino-acid biosynthesis; L-proline biosynthesis; L-glutamate 5-semialdehyde from L-glutamate: step 1/2. Catalyzes the transfer of a phosphate group to glutamate to form L-glutamate 5-phosphate. This is Glutamate 5-kinase from Rhodopseudomonas palustris (strain BisB18).